A 206-amino-acid polypeptide reads, in one-letter code: Small ribosomal subunit protein uS4A (206 aa).

Positions Met-98–Asn-163 constitute an S4 RNA-binding domain.

Belongs to the universal ribosomal protein uS4 family. As to quaternary structure, part of the 30S ribosomal subunit. Contacts protein S5. The interaction surface between S4 and S5 is involved in control of translational fidelity.

One of the primary rRNA binding proteins, it binds directly to 16S rRNA where it nucleates assembly of the body of the 30S subunit. Its function is as follows. With S5 and S12 plays an important role in translational accuracy. The protein is Small ribosomal subunit protein uS4A of Clostridium perfringens (strain SM101 / Type A).